An 817-amino-acid polypeptide reads, in one-letter code: Neurabin-2 (817 aa).

2 disordered regions span residues 1–52 and 64–163; these read MMKT…KYGS and MGTT…GGDK. Actin-binding stretches follow at residues 1–154 and 164–282; these read MMKT…FERS and EAVA…QHRV. Phosphoserine; by MAPK1 is present on serine 15. Serine 17 is modified (phosphoserine; by CDK5). A Phosphoserine; by PKA modification is found at serine 94. 2 positions are modified to phosphoserine: serine 100 and serine 116. The segment at 100–371 is interaction with D(2) dopamine receptor; it reads SLNENVDHSA…LERGVDNGRA (272 aa). Pro residues predominate over residues 131 to 141; that stretch reads SAQPAPPPHPP. An interaction with ADRA2A, ADRA2B and ADRA2C region spans residues 169–255; that stretch reads RLLRQERAGL…KRSRVFQPPP (87 aa). At serine 192 the chain carries Phosphoserine. Residue threonine 193 is modified to Phosphothreonine. A Phosphoserine; by MAPK1 modification is found at serine 205. Threonine 207 carries the post-translational modification Phosphothreonine. The segment at 216 to 451 is disordered; that stretch reads EKADSRTGLH…DPAPSRKIHF (236 aa). A compositionally biased stretch (basic and acidic residues) spans 290-301; sequence KPREVRKIKPVE. Composition is skewed to low complexity over residues 332-341 and 399-409; these read STPATTASPA and SGLGEDSGGSA. Positions 410–425 are enriched in acidic residues; that stretch reads LEEDDEEDEEDGEPPY. The tract at residues 417 to 494 is interaction with protein phosphatase 1; the sequence is DEEDGEPPYE…LEKRVERLEL (78 aa). Serine 438 carries the phosphoserine modification. Residues 447 to 451 carry the PP1-binding motif motif; the sequence is RKIHF. The interval 480–525 is interaction with RGS2; it reads SAEYELEKRVERLELFPVELEKDSEGLGISIIGMGAGADMGLEKLG. The 89-residue stretch at 496–584 folds into the PDZ domain; the sequence is PVELEKDSEG…RVRFMIGRER (89 aa). Positions 595–616 form a coiled coil; that stretch reads IQQTLEQERWQREMMEQRYAQY. Residues 595–816 are interaction with TGN38; the sequence is IQQTLEQERW…NLQTLRNSNS (222 aa). Position 658 is a phosphoserine (serine 658). The stretch at 665-816 forms a coiled coil; sequence EKLVHKFKEL…NLQTLRNSNS (152 aa).

As to quaternary structure, possibly exists as a homodimer, homotrimer or a homotetramer. Interacts with F-actin, PPP1CA, neurabin-1, TGN38 and D(2) dopamine receptor. Interacts with RGS1, RGS2, RGS4, RGS19 and ADRA1B, ADRA2A, ADRA2B, ADRA2C, CDKN2A, PPP1R2, RASGFR1 and TIAM1. Interacts (via C-terminus) with SPATA13 (via C-terminal tail). Interacts with DCLK2. Interacts with ADRA2B. Post-translationally, stimulation of D1 (but not D2) dopamine receptors induces Ser-94 phosphorylation. Dephosphorylation of Ser-94 is mediated mainly by PP1 and to a lesser extent by PP2A. Phosphorylation of spinophilin disrupts its association with F-actin, but does not affect its binding to PP1.

It is found in the cytoplasm. It localises to the cytoskeleton. The protein resides in the nucleus. The protein localises to the postsynaptic density. Its subcellular location is the cell junction. It is found in the adherens junction. It localises to the cell projection. The protein resides in the dendritic spine. The protein localises to the cell membrane. Its subcellular location is the lamellipodium. It is found in the filopodium. It localises to the ruffle membrane. Its function is as follows. Seems to act as a scaffold protein in multiple signaling pathways. Modulates excitatory synaptic transmission and dendritic spine morphology. Binds to actin filaments (F-actin) and shows cross-linking activity. Binds along the sides of the F-actin. May play an important role in linking the actin cytoskeleton to the plasma membrane at the synaptic junction. Believed to target protein phosphatase 1/PP1 to dendritic spines, which are rich in F-actin, and regulates its specificity toward ion channels and other substrates, such as AMPA-type and NMDA-type glutamate receptors. Plays a role in regulation of G-protein coupled receptor signaling, including dopamine D2 receptors and alpha-adrenergic receptors. May establish a signaling complex for dopaminergic neurotransmission through D2 receptors by linking receptors downstream signaling molecules and the actin cytoskeleton. Binds to ADRA1B and RGS2 and mediates regulation of ADRA1B signaling. May confer to Rac signaling specificity by binding to both, RacGEFs and Rac effector proteins. Probably regulates p70 S6 kinase activity by forming a complex with TIAM1. Required for hepatocyte growth factor (HGF)-induced cell migration. The polypeptide is Neurabin-2 (Ppp1r9b) (Mus musculus (Mouse)).